The chain runs to 185 residues: Ribosomal RNA small subunit methyltransferase G (185 aa).

S-adenosyl-L-methionine is bound by residues Gly-59, Phe-64, 110 to 111, and Arg-127; that span reads IQ.

The protein belongs to the methyltransferase superfamily. RNA methyltransferase RsmG family.

The protein localises to the cytoplasm. The enzyme catalyses guanosine(527) in 16S rRNA + S-adenosyl-L-methionine = N(7)-methylguanosine(527) in 16S rRNA + S-adenosyl-L-homocysteine. Functionally, specifically methylates the N7 position of guanine in position 527 of 16S rRNA. The chain is Ribosomal RNA small subunit methyltransferase G from Helicobacter hepaticus (strain ATCC 51449 / 3B1).